A 380-amino-acid chain; its full sequence is MKPMTSDVMPAAERKVRVDLAERSYDILIGPGLIAAAGGEIASRLKGRKMAVITDENVAPRYLEPLMASLAGSGMDPVSLILPAGEKTKSFEHLIPVCEAVLGARIERNDAVIALGGGVIGDLTGFAAGIVRRGSRFIQIPTSLLAQVDSSVGGKTGINSPHGKNLIGVFHQPDLVLADTAALDTLSPREFRAGYAEVVKYGLIDKPDFFEWLEQNWQAVFAGGPARIEAIAVSCQAKADVVAADERENGLRALLNLGHTFGHALEAATGYDSKRLVHGEGVAIGMVLAHEFSARMNIASPDDARRVEMHLKTVGLPTRMADIPGMLPPADRLLEAIAQDKKVKGGKFTFILTRGIGQSFIADDVPSSEVLSFLEERIPR.

Residues 118–122, 142–143, Lys-155, and Lys-164 each bind NAD(+); these read GVIGD and TS. The Zn(2+) site is built by Glu-197, His-259, and His-278.

It belongs to the sugar phosphate cyclases superfamily. Dehydroquinate synthase family. Co(2+) serves as cofactor. Zn(2+) is required as a cofactor. It depends on NAD(+) as a cofactor.

The protein resides in the cytoplasm. It catalyses the reaction 7-phospho-2-dehydro-3-deoxy-D-arabino-heptonate = 3-dehydroquinate + phosphate. It participates in metabolic intermediate biosynthesis; chorismate biosynthesis; chorismate from D-erythrose 4-phosphate and phosphoenolpyruvate: step 2/7. In terms of biological role, catalyzes the conversion of 3-deoxy-D-arabino-heptulosonate 7-phosphate (DAHP) to dehydroquinate (DHQ). This is 3-dehydroquinate synthase from Sinorhizobium medicae (strain WSM419) (Ensifer medicae).